The primary structure comprises 251 residues: Probable transcriptional regulatory protein cu0933 (251 aa).

The interval 56-79 (AKKSSVPNDNIERARKRGSGEEAG) is disordered.

It belongs to the TACO1 family.

Its subcellular location is the cytoplasm. The sequence is that of Probable transcriptional regulatory protein cu0933 from Corynebacterium urealyticum (strain ATCC 43042 / DSM 7109).